Here is a 384-residue protein sequence, read N- to C-terminus: 4-hydroxy-3-methylbut-2-en-1-yl diphosphate synthase (flavodoxin) (384 aa).

Residues Cys-280, Cys-283, Cys-315, and Glu-322 each coordinate [4Fe-4S] cluster.

It belongs to the IspG family. The cofactor is [4Fe-4S] cluster.

It catalyses the reaction (2E)-4-hydroxy-3-methylbut-2-enyl diphosphate + oxidized [flavodoxin] + H2O + 2 H(+) = 2-C-methyl-D-erythritol 2,4-cyclic diphosphate + reduced [flavodoxin]. Its pathway is isoprenoid biosynthesis; isopentenyl diphosphate biosynthesis via DXP pathway; isopentenyl diphosphate from 1-deoxy-D-xylulose 5-phosphate: step 5/6. Its function is as follows. Converts 2C-methyl-D-erythritol 2,4-cyclodiphosphate (ME-2,4cPP) into 1-hydroxy-2-methyl-2-(E)-butenyl 4-diphosphate. In Parafrankia sp. (strain EAN1pec), this protein is 4-hydroxy-3-methylbut-2-en-1-yl diphosphate synthase (flavodoxin).